The primary structure comprises 793 residues: DnaJ homolog subfamily C member 10 (793 aa).

The signal sequence occupies residues 1–32 (MGVWLNKDDYIRDLKRIILCFLIVYMAILVGT). One can recognise a J domain in the interval 35 to 100 (DFYSLLGVSK…DLRKKYDKYG (66 aa)). The region spanning 130–232 (EIITLERREF…ESLVSFAMQH (103 aa)) is the Thioredoxin 1 domain. The cysteines at positions 158 and 161 are disulfide-linked. Trxb stretches follow at residues 235–350 (STVT…LPDF) and 348–463 (PDFE…PQNF). Thioredoxin domains lie at 454-553 (HVTT…IEDL), 557-662 (SVVS…SLRI), and 671-778 (VSTD…ISEK). Cys480 and Cys483 are oxidised to a cystine. N-linked (GlcNAc...) asparagine glycosylation is present at Asn530. 2 cysteine pairs are disulfide-bonded: Cys588–Cys591 and Cys700–Cys703. Positions 790–793 (KDEL) match the Prevents secretion from ER motif.

In terms of assembly, interacts with EDEM1. Interacts with HSPA5 (via its J domain).

The protein resides in the endoplasmic reticulum lumen. Functionally, endoplasmic reticulum disulfide reductase involved both in the correct folding of proteins and degradation of misfolded proteins. Required for efficient folding of proteins in the endoplasmic reticulum by catalyzing the removal of non-native disulfide bonds formed during the folding of proteins, such as LDLR. Also involved in endoplasmic reticulum-associated degradation (ERAD) by reducing incorrect disulfide bonds in misfolded glycoproteins recognized by EDEM1. Interaction with HSPA5 is required its activity, not for the disulfide reductase activity, but to facilitate the release of DNAJC10 from its substrate. Promotes apoptotic signaling pathway in response to endoplasmic reticulum stress. This Homo sapiens (Human) protein is DnaJ homolog subfamily C member 10 (DNAJC10).